A 102-amino-acid polypeptide reads, in one-letter code: MAKQKVRIRLKAYDHKILDQSARQIVEAAERTGALVAGPVPLPTKIEKHSVIRSPFIDKDSQEQFEIRTHKRLIDVLDPSQQTINALMKLNLPAGVDIEIKL.

The protein belongs to the universal ribosomal protein uS10 family. In terms of assembly, part of the 30S ribosomal subunit.

Functionally, involved in the binding of tRNA to the ribosomes. In Roseiflexus sp. (strain RS-1), this protein is Small ribosomal subunit protein uS10.